A 146-amino-acid polypeptide reads, in one-letter code: Sordarin/hypoxysordarin biosynthesis cluster protein G (146 aa).

Its pathway is antibiotic biosynthesis. Part of the gene cluster that mediates the biosynthesis of sordarin and hypoxysordarin, glycoside antibiotics with a unique tetracyclic diterpene aglycone structure. First, the geranylgeranyl diphosphate synthase sdnC constructs GGDP from farnesyl diphosphate and isopentenyl diphosphate. The diterpene cyclase sdnA then catalyzes the cyclization of GGDP to afford cycloaraneosene. Cycloaraneosene is then hydroxylated four times by the putative cytochrome P450 monooxygenases sdnB, sdnE, sdnF and sdnH to give a hydroxylated cycloaraneosene derivative such as cycloaraneosene-8,9,13,19-tetraol. Although the order of the hydroxylations is unclear, at least C8, C9 and C13 of the cycloaraneosene skeleton are hydroxylated before the sordaricin formation. Dehydration of the 13-hydroxy group of the hydroxylated cycloaraneosene derivative might be catalyzed by an unassigned hypothetical protein such as sdnG and sdnP to construct the cyclopentadiene moiety. The FAD-dependent oxidoreductase sdnN is proposed to catalyze the oxidation at C9 of the hydroxylated cycloaraneosene derivative and also catalyze the Baeyer-Villiger oxidation to give the lactone intermediate. The presumed lactone intermediate would be hydrolyzed to give an acrolein moiety and a carboxylate moiety. Then, [4+2]cycloaddition would occur between the acrolein moiety and the cyclopentadiene moiety to give sordaricin. SdnN might also be involved in the [4+2]cycloaddition after the hypothesized oxidation to accommodate the oxidized product and prompt the [4+2]cycloaddition. GDP-6-deoxy-D-altrose may be biosynthesized from GDP-D-mannose by the putative GDP-mannose-4,6-dehydratase sdnI and the short-chain dehydrogenase sdnK. The glycosyltransferase sdnJ catalyzes the attachment of 6-deoxy-D-altrose onto the 19-hydroxy group of sordaricin to give 4'-O-demethylsordarin. The methyltransferase sdnD would complete the biosynthesis of sordarin. Sordarin can be further modified into hypoxysordarin. The unique acyl chain at the 3'-hydroxy group of hypoxysordarin would be constructed by an iterative type I PKS sdnO and the trans-acting polyketide methyltransferase sdnL. SdnL would be responsible for the introduction of an alpha-methyl group of the polyketide chain. Alternatively, the beta-lactamase-like protein sdnR might be responsible for the cleavage and transfer of the polyketide chain from the PKS sdnO to sordarin. Two putative cytochrome P450 monooxygenases, sdnQ and sdnT, might catalyze the epoxidations of the polyketide chain to complete the biosynthesis of hypoxysordarin. Transcriptional regulators sdnM and sdnS are presumably encoded for the transcriptional regulation of the expression of the sdn gene cluster. The polypeptide is Sordarin/hypoxysordarin biosynthesis cluster protein G (Sordaria araneosa (Pleurage araneosa)).